Here is a 537-residue protein sequence, read N- to C-terminus: Mitochondrial distribution and morphology protein 34 (537 aa).

The 195-residue stretch at 1-195 (MAFNFNWSPL…LPAIIHRLSL (195 aa)) folds into the SMP-LTD domain. Disordered regions lie at residues 320-339 (YTFSDNGSQDQGSLPSRPSL), 348-403 (GLSL…IMPH), 421-493 (GRSP…DTSS), and 516-537 (KNGNPTFWDDQDDTPPPAYEAR). The segment covering 355–371 (RHSKAGRKKKTRVVNLR) has biased composition (basic residues). Acidic residues predominate over residues 378–391 (ANSEEEEDTPETDS). Over residues 425–441 (DLQQQPRRPSFRAQATN) the composition is skewed to polar residues.

Belongs to the MDM34 family. As to quaternary structure, component of the ER-mitochondria encounter structure (ERMES) or MDM complex, composed of MMM1, MDM10, MDM12 and MDM34.

Its subcellular location is the mitochondrion outer membrane. Functionally, component of the ERMES/MDM complex, which serves as a molecular tether to connect the endoplasmic reticulum (ER) and mitochondria. Components of this complex are involved in the control of mitochondrial shape and protein biogenesis, and function in nonvesicular lipid trafficking between the ER and mitochondria. MDM34 is required for the interaction of the ER-resident membrane protein MMM1 and the outer mitochondrial membrane-resident beta-barrel protein MDM10. The sequence is that of Mitochondrial distribution and morphology protein 34 from Chaetomium globosum (strain ATCC 6205 / CBS 148.51 / DSM 1962 / NBRC 6347 / NRRL 1970) (Soil fungus).